The sequence spans 378 residues: Cytochrome b (378 aa).

Transmembrane regions (helical) follow at residues 34 to 54, 78 to 99, 114 to 134, and 179 to 199; these read FGSL…FLAM, WLLR…YLHV, WLVG…GYVL, and FFTF…IHIL. Heme b-binding residues include H84 and H98. The heme b site is built by H183 and H197. H202 lines the a ubiquinone pocket. Transmembrane regions (helical) follow at residues 227–247, 289–309, 321–341, and 348–368; these read FKDI…VLIN, LGGV…PFYH, INQI…WIGA, and YVLV…FNPL.

Belongs to the cytochrome b family. In terms of assembly, the main subunits of complex b-c1 are: cytochrome b, cytochrome c1 and the Rieske protein. The cofactor is heme b.

It is found in the mitochondrion inner membrane. Functionally, component of the ubiquinol-cytochrome c reductase complex (complex III or cytochrome b-c1 complex) that is part of the mitochondrial respiratory chain. The b-c1 complex mediates electron transfer from ubiquinol to cytochrome c. Contributes to the generation of a proton gradient across the mitochondrial membrane that is then used for ATP synthesis. This is Cytochrome b (MT-CYB) from Cochliomyia hominivorax (Primary screw-worm).